We begin with the raw amino-acid sequence, 215 residues long: Protein GET1 (215 aa).

Residues 1–4 are Lumenal-facing; that stretch reads MINL. A helical membrane pass occupies residues 5–24; that stretch reads ALVIFLCTLLNQIVSWVGKS. Topologically, residues 25-108 are cytoplasmic; the sequence is VLQEIAFTAY…SFSKKFSTLL (84 aa). Residues 73–94 adopt a coiled-coil conformation; the sequence is AKLRRKLDKGLADLEKTNNTLS. Residues 109–129 form a helical membrane-spanning segment; that stretch reads WLMTTGAQFLLSWWFRKQPIF. The Lumenal segment spans residues 130 to 153; sequence WLPEGWVPYPVAWLLSFPSAPIGS. The chain crosses the membrane as a helical span at residues 154 to 170; it reads VSSGAWGAICRRVLSTL. Residues 171–215 lie on the Cytoplasmic side of the membrane; that stretch reads QEIIQSVLAPSPAATGPVPTGPSSAKNDQPEAKIEALALEHEKLD. The interval 181 to 202 is disordered; sequence SPAATGPVPTGPSSAKNDQPEA.

The protein belongs to the WRB/GET1 family. Interacts with GET3.

It is found in the endoplasmic reticulum membrane. Functionally, required for the post-translational delivery of tail-anchored (TA) proteins to the endoplasmic reticulum. Acts as a membrane receptor for soluble GET3, which recognizes and selectively binds the transmembrane domain of TA proteins in the cytosol. The protein is Protein GET1 of Cryptococcus neoformans var. neoformans serotype D (strain B-3501A) (Filobasidiella neoformans).